Consider the following 312-residue polypeptide: Olfactory receptor 2T8 (312 aa).

Topologically, residues 1 to 26 (MENGSYTSYFILLGLFNHTRAHQVLF) are extracellular. 2 N-linked (GlcNAc...) asparagine glycosylation sites follow: Asn-3 and Asn-17. Residues 27 to 47 (MMVLSIVLTSLFGNSLMILLI) traverse the membrane as a helical segment. The Cytoplasmic segment spans residues 48–55 (HWDHRLHT). The helical transmembrane segment at 56-76 (PMYFLLSQLSLMDVMLVSTTV) threads the bilayer. Over 77–96 (PKMAADYLTGSKAISRAGCG) the chain is Extracellular. Cys-95 and Cys-177 are oxidised to a cystine. Residues 97–117 (AQIFFLPTLGGGECFLLAAMA) traverse the membrane as a helical segment. Residues 118–143 (YDRYAAVCHPLRYPTLMSWQLCLRMN) lie on the Cytoplasmic side of the membrane. The helical transmembrane segment at 144 to 164 (LSCWLLGAADGLLQAVATLSF) threads the bilayer. The Extracellular portion of the chain corresponds to 165-201 (PYCGAHEIDHFFCETPVLVRLACADTSVFENAMYICC). Residues 202–222 (VLMLLVPFSLILSSYGLILAA) form a helical membrane-spanning segment. Topologically, residues 223 to 234 (VLHMRSTEARKK) are cytoplasmic. A helical membrane pass occupies residues 235–255 (AFATCSSHVAVVGLFYGAAIF). Residues 256 to 269 (TYMRPKSHRSTNHD) lie on the Extracellular side of the membrane. Residues 270–290 (KVVSAFYTMFTPLLNPLIYSV) traverse the membrane as a helical segment. Residues 291–312 (KNSEVKGALTRCMGRCVALSRE) lie on the Cytoplasmic side of the membrane.

This sequence belongs to the G-protein coupled receptor 1 family.

It localises to the cell membrane. In terms of biological role, odorant receptor. In Homo sapiens (Human), this protein is Olfactory receptor 2T8 (OR2T8).